Consider the following 216-residue polypeptide: Gamma-glutamylcyclotransferase 2-1 (216 aa).

5–10 is a substrate binding site; the sequence is VFGYGS. E87 serves as the catalytic Proton acceptor.

The protein belongs to the gamma-glutamylcyclotransferase family. Mn(2+) is required as a cofactor. In terms of tissue distribution, expressed in the central vascular bundle of roots, leaf veins, hydathodes, cauline leaves, shoot apex, sepal veins, flower receptacles and developing seeds.

The protein resides in the cytoplasm. The enzyme catalyses an alpha-(gamma-L-glutamyl)-L-amino acid = 5-oxo-L-proline + an L-alpha-amino acid. Its function is as follows. Catalyzes the formation of 5-oxoproline from gamma-glutamyl dipeptides and plays a significant role in glutathione (GSH) homeostasis. Converts both GSH and gamma-glutamyl-L-alanine to 5-oxoproline in vitro. Plays a role in detoxification of heavy metals and metalloids by recycling glutamate and maintaining GSH homeostasis. The chain is Gamma-glutamylcyclotransferase 2-1 from Arabidopsis thaliana (Mouse-ear cress).